The following is an 83-amino-acid chain: uncharacterized protein (83 aa).

The segment at 40–65 (RMQAGASPDEDNDVNGETSFSRSFGG) is disordered. Residues 54–65 (NGETSFSRSFGG) are compositionally biased toward polar residues.

This is an uncharacterized protein from Dictyostelium discoideum (Social amoeba).